A 466-amino-acid polypeptide reads, in one-letter code: Asparagine--tRNA ligase (466 aa).

It belongs to the class-II aminoacyl-tRNA synthetase family. In terms of assembly, homodimer.

It is found in the cytoplasm. It catalyses the reaction tRNA(Asn) + L-asparagine + ATP = L-asparaginyl-tRNA(Asn) + AMP + diphosphate + H(+). This is Asparagine--tRNA ligase from Buchnera aphidicola subsp. Baizongia pistaciae (strain Bp).